We begin with the raw amino-acid sequence, 449 residues long: Glutamate--tRNA ligase (449 aa).

The short motif at 10 to 20 (PSPTGHLHIGN) is the 'HIGH' region element. Residues 214–218 (KLSKR) carry the 'KMSKS' region motif. Residue Lys-217 participates in ATP binding.

Belongs to the class-I aminoacyl-tRNA synthetase family. Glutamate--tRNA ligase type 1 subfamily. In terms of assembly, monomer.

The protein localises to the cytoplasm. It catalyses the reaction tRNA(Glu) + L-glutamate + ATP = L-glutamyl-tRNA(Glu) + AMP + diphosphate. Catalyzes the attachment of glutamate to tRNA(Glu) in a two-step reaction: glutamate is first activated by ATP to form Glu-AMP and then transferred to the acceptor end of tRNA(Glu). This is Glutamate--tRNA ligase from Acholeplasma laidlawii (strain PG-8A).